Reading from the N-terminus, the 380-residue chain is Cytochrome b (380 aa).

The next 4 membrane-spanning stretches (helical) occupy residues 33–53 (FGSL…FLAM), 77–98 (WLIR…YLHV), 113–133 (WNIG…GYVL), and 178–198 (FFAF…IHLL). Heme b-binding residues include histidine 83 and histidine 97. Positions 182 and 196 each coordinate heme b. An a ubiquinone-binding site is contributed by histidine 201. Transmembrane regions (helical) follow at residues 226–246 (YKDL…ALFS), 288–308 (LGGV…PMLH), 320–340 (LSQI…WIGG), and 347–367 (FVLI…IALP).

It belongs to the cytochrome b family. The cytochrome bc1 complex contains 3 respiratory subunits (MT-CYB, CYC1 and UQCRFS1), 2 core proteins (UQCRC1 and UQCRC2) and probably 6 low-molecular weight proteins. It depends on heme b as a cofactor.

It is found in the mitochondrion inner membrane. In terms of biological role, component of the ubiquinol-cytochrome c reductase complex (complex III or cytochrome b-c1 complex) that is part of the mitochondrial respiratory chain. The b-c1 complex mediates electron transfer from ubiquinol to cytochrome c. Contributes to the generation of a proton gradient across the mitochondrial membrane that is then used for ATP synthesis. The protein is Cytochrome b (mt-cyb) of Acipenser persicus (Persian sturgeon).